Here is a 120-residue protein sequence, read N- to C-terminus: Large ribosomal subunit protein uL18 (120 aa).

Belongs to the universal ribosomal protein uL18 family. Part of the 50S ribosomal subunit; part of the 5S rRNA/L5/L18/L25 subcomplex. Contacts the 5S and 23S rRNAs.

Its function is as follows. This is one of the proteins that bind and probably mediate the attachment of the 5S RNA into the large ribosomal subunit, where it forms part of the central protuberance. This Bacillus cytotoxicus (strain DSM 22905 / CIP 110041 / 391-98 / NVH 391-98) protein is Large ribosomal subunit protein uL18.